The chain runs to 396 residues: NADH-quinone oxidoreductase subunit D (396 aa).

This sequence belongs to the complex I 49 kDa subunit family. NDH-1 is composed of 14 different subunits. Subunits NuoB, C, D, E, F, and G constitute the peripheral sector of the complex.

The protein localises to the cell inner membrane. The catalysed reaction is a quinone + NADH + 5 H(+)(in) = a quinol + NAD(+) + 4 H(+)(out). In terms of biological role, NDH-1 shuttles electrons from NADH, via FMN and iron-sulfur (Fe-S) centers, to quinones in the respiratory chain. The immediate electron acceptor for the enzyme in this species is believed to be ubiquinone. Couples the redox reaction to proton translocation (for every two electrons transferred, four hydrogen ions are translocated across the cytoplasmic membrane), and thus conserves the redox energy in a proton gradient. In Brucella abortus (strain S19), this protein is NADH-quinone oxidoreductase subunit D.